We begin with the raw amino-acid sequence, 317 residues long: tRNA dimethylallyltransferase (317 aa).

ATP is bound at residue Gly14–Thr21. Substrate is bound at residue Thr16–Thr21. Residues Asp39–Gln42 form an interaction with substrate tRNA region.

Belongs to the IPP transferase family. Monomer. Mg(2+) is required as a cofactor.

It catalyses the reaction adenosine(37) in tRNA + dimethylallyl diphosphate = N(6)-dimethylallyladenosine(37) in tRNA + diphosphate. Catalyzes the transfer of a dimethylallyl group onto the adenine at position 37 in tRNAs that read codons beginning with uridine, leading to the formation of N6-(dimethylallyl)adenosine (i(6)A). The polypeptide is tRNA dimethylallyltransferase (Bacillus cereus (strain Q1)).